Here is a 186-residue protein sequence, read N- to C-terminus: UPF0397 protein LBUL_1584 (186 aa).

Transmembrane regions (helical) follow at residues 13–33 (IAALGIGSAVFVIVGRFASIP), 46–66 (AFLAMIAMIYGPTVGFGVGFI), 79–99 (TWWNWNFAAGFLGFFIGLYAL), 114–134 (VIFNVVQVVANAIVWFLLGSV), and 150–170 (QAGLTTLMDGLTIAVLGTILL).

It belongs to the UPF0397 family.

The protein localises to the cell membrane. This Lactobacillus delbrueckii subsp. bulgaricus (strain ATCC BAA-365 / Lb-18) protein is UPF0397 protein LBUL_1584.